An 81-amino-acid chain; its full sequence is Delta-conotoxin PVIA (81 aa).

An N-terminal signal peptide occupies residues 1–22 (MKLTCVMIVAVLFLTAWTFVTA). Residues 23-49 (DDSKNGLENHFWKARDEMKNREASKLD) constitute a propeptide that is removed on maturation. Intrachain disulfides connect Cys54–Cys69, Cys61–Cys73, and Cys68–Cys78. 2 positions are modified to 4-hydroxyproline: Pro57 and Pro65. Position 80 is a glycine amide; in form delta-conotoxin PVIA (Gly80).

In terms of processing, the difference between delta-conotoxin PVIA and [deamido]-delta-conotoxin PVIA lies in the state of amidation of Gly-80. In terms of tissue distribution, expressed by the venom duct.

Its subcellular location is the secreted. Its function is as follows. Delta-conotoxins bind to site 6 of voltage-gated sodium channels (Nav) and inhibit the inactivation process. This toxin shows weak effects on rNav1.2/SCN2A (EC(50)=2.9 uM), rNav1.4/SCN4A (EC(50)=5.2 uM), hNav1.7/SCN9A (EC(50)=1.9 uM) and rNav1.7/SCN9A (EC(50)=6.4 uM). In vivo, this toxin shows different effects. In mice, injection of this toxin causes hyperactivity, rapid running, limb extension, and death. In fish, the peptide elicites spurts of rapid swimming, with twisted motions, quivering fins and the lockjaw extended mouth syndrome. Rigid paralysis and death are observed at higher doses. In mollusks, this peptide is inactive. Injection of this peptide together with the kappa-conotoxin PVIIA causes the sudden tetanus of prey (STOP) syndrome, which is a single, lethal 'fin-pop' in envenomed fish. The protein is Delta-conotoxin PVIA of Conus purpurascens (Purple cone).